The chain runs to 928 residues: Sodium/calcium exchanger 3 (928 aa).

A signal peptide spans 1–30; that stretch reads MAWLRLQPLTSAFLHFGLVTFVLFLNCLRA. Residues 31–73 are Extracellular-facing; it reads EAGDSGDVPSAGQNNESCSGSSDCKEGVILPIWYPENPSLGDK. A glycan (N-linked (GlcNAc...) asparagine) is linked at asparagine 45. The chain crosses the membrane as a helical span at residues 74-94; it reads IARVIVYFVALIYMFLGVSII. Topologically, residues 95–147 are cytoplasmic; sequence ADRFMASIEVITSQEREVTIKKPNGETSTTTIRVWNETVSNLTLMALGSSAPE. The chain crosses the membrane as a helical span at residues 148–168; sequence ILLSLIEVCGHGFIAGDLGPS. Position 169 (threonine 169) is a topological domain, extracellular. Residues 170–190 form a helical membrane-spanning segment; the sequence is IVGSAAFNMFIIIGICVYVIP. Over 191 to 201 the chain is Cytoplasmic; sequence DGETRKIKHLR. The chain crosses the membrane as a helical span at residues 202 to 222; that stretch reads VFFVTAAWSIFAYIWLYMILA. The Extracellular segment spans residues 223-230; it reads VFSPGVVQ. A helical transmembrane segment spans residues 231 to 251; it reads VWEGLLTLFFFPVCVLLAWVA. Topologically, residues 252 to 727 are cytoplasmic; that stretch reads DKRLLFYKYM…DESGEERLPS (476 aa). Positions 253-272 are putative calmodulin-binding region; the sequence is KRLLFYKYMHKKYRTDKHRG. Calx-beta domains follow at residues 390–485 and 519–618; these read EPED…VRLS and ATVT…VIEM. 14 residues coordinate Ca(2+): glutamate 409, aspartate 445, aspartate 470, aspartate 471, isoleucine 473, glutamate 475, glutamate 478, aspartate 525, aspartate 526, aspartate 527, glutamate 543, aspartate 579, aspartate 605, and glutamate 673. Residues 728 to 748 traverse the membrane as a helical segment; sequence CFDYVMHFLTVFWKVLFACVP. Topologically, residues 749–755 are extracellular; it reads PTEYCHG. Residues 756-776 form a helical membrane-spanning segment; sequence WACFVVSILIIGMLTAIIGDL. Residues 777–779 are Cytoplasmic-facing; that stretch reads ASH. A helical membrane pass occupies residues 780-800; the sequence is FGCTIGLKDSVTAVVFVAFGT. The Extracellular segment spans residues 801–829; the sequence is SVPDTFASKAAALQDVYADASIGNVTGSN. Asparagine 824 carries N-linked (GlcNAc...) asparagine glycosylation. Residues 830–850 traverse the membrane as a helical segment; sequence AVNVFLGIGLAWSVAAIYWAM. The Cytoplasmic portion of the chain corresponds to 851-861; the sequence is QGQEFHVSAGT. Residues 862-882 form a helical membrane-spanning segment; the sequence is LAFSVTLFTIFAFVCLSVLLY. The Extracellular segment spans residues 883–904; that stretch reads RRRPHLGGELGGPRGCKLATTW. A helical transmembrane segment spans residues 905–925; the sequence is LFVSLWLLYILFATLEAYCYI. Over 926–928 the chain is Cytoplasmic; the sequence is KGF.

The protein belongs to the Ca(2+):cation antiporter (CaCA) (TC 2.A.19) family. SLC8 subfamily. As to quaternary structure, interacts with AKAP1. In terms of tissue distribution, detected in gray and white matter in the spinal cord. Detected in hippocampus neurons. Detected in brain cortex neurons. Detected in skeletal muscle (at protein level). Isoform 1 and isoform 2 are highly expressed in brain; levels are higher for isoform 2. Isoform 1 and isoform 2 are detected in soleus muscle; levels are higher for isoform 1. Detected in gastrocnemius muscle.

The protein resides in the cell membrane. It is found in the perikaryon. The protein localises to the cell projection. Its subcellular location is the dendrite. It localises to the dendritic spine. The protein resides in the sarcolemma. It is found in the cytoplasm. The protein localises to the sarcoplasm. Its subcellular location is the cell junction. It localises to the mitochondrion outer membrane. The protein resides in the perinuclear region. It is found in the endoplasmic reticulum membrane. It carries out the reaction Ca(2+)(in) + 3 Na(+)(out) = Ca(2+)(out) + 3 Na(+)(in). Its activity is regulated as follows. Calcium transport is stimulated by cytoplasmic Ca(2+) and is inhibited by Na(+). Isoform 1 is more sensitive to stimulation by Ca(2+) than isoform 2. Isoform 2 is more sensitive to inactivation by Na(+). In terms of biological role, mediates the electrogenic exchange of Ca(2+) against Na(+) ions across the cell membrane, and thereby contributes to the regulation of cytoplasmic Ca(2+) levels and Ca(2+)-dependent cellular processes. Contributes to cellular Ca(2+) homeostasis in excitable cells, both in muscle and in brain. In a first phase, voltage-gated channels mediate the rapid increase of cytoplasmic Ca(2+) levels due to release of Ca(2+) stores from the endoplasmic reticulum. SLC8A3 mediates the export of Ca(2+) from the cell during the next phase, so that cytoplasmic Ca(2+) levels rapidly return to baseline. Contributes to Ca(2+) transport during excitation-contraction coupling in muscle. In neurons, contributes to the rapid decrease of cytoplasmic Ca(2+) levels back to baseline after neuronal activation, and thereby contributes to modulate synaptic plasticity, learning and memory. Required for normal oligodendrocyte differentiation and for normal myelination. Mediates Ca(2+) efflux from mitochondria and contributes to mitochondrial Ca(2+) ion homeostasis. Isoform 1 displays higher calcium exchanger activity than isoform 2, probably because isoform 1 has a lower threshold for activation by cytoplasmic Ca(2+). The protein is Sodium/calcium exchanger 3 of Mus musculus (Mouse).